A 2415-amino-acid chain; its full sequence is Bradyzoite-formation deficient protein 1 (2415 aa).

3 disordered regions span residues 369–392, 418–481, and 761–845; these read WNKP…PEET, HLTS…PYTR, and DGCG…QDTQ. The span at 419-429 shows a compositional bias: basic residues; the sequence is LTSRQHPNPRP. Residues 430–443 show a composition bias toward basic and acidic residues; sequence RMKEEHCGREREVL. Polar residues-rich tracts occupy residues 444–460 and 832–843; these read SSEQ…TPAS and PRTTSSSSYGQD. A Myb-like domain is found at 921–968; it reads WSAEEDASLAELVSRKGFKWALISSQLTGAFGIPRTGKQCRERWFNHV. The region spanning 969–1023 is the HTH myb-type domain; it reads NPEVKKGDWSAEEDAMILMLQNELGNRWATIAKKLRGRTENAVKNRFISLSNARL. The segment at residues 996-1019 is a DNA-binding region (H-T-H motif); that stretch reads WATIAKKLRGRTENAVKNRFISLS. Disordered stretches follow at residues 1027-1050, 1098-1127, 1206-1270, 1319-1343, 1501-1521, 1905-1932, 1959-2013, and 2161-2222; these read RPKR…KSSG, VSRP…LKNT, NDER…NGLD, PACD…AQRQ, QLWT…QQHE, VSRD…TSQS, RVRW…GSTA, and GTDA…EMQD. Residues 1036-1050 are compositionally biased toward polar residues; sequence DCFSNRRTGSGKSSG. Positions 1227–1237 are enriched in basic and acidic residues; the sequence is AHEHADIARSD. Composition is skewed to polar residues over residues 1327 to 1343 and 1501 to 1520; these read PQNS…AQRQ and QLWT…NQQH. Polar residues predominate over residues 1974-1985; the sequence is SVSSGASNSATT. Residues 2181–2197 show a composition bias toward basic and acidic residues; that stretch reads QAHRRDGHDMQRVQRCD.

The protein localises to the nucleus. Functionally, master transcription factor that controls the differentiation of acute-stage tachyzoite parasites into chronic-stage bradyzoites, which form intracellular cysts resistant to immune clearance and existing therapies. Sufficient to drive differentiation into bradyzoite stage. Following translation in response to stress conditions, binds to the promoter of many chronic stage-specific genes and promotes their expression, thereby driving differentiation into bradyzoites. The polypeptide is Bradyzoite-formation deficient protein 1 (Toxoplasma gondii (strain ATCC 50611 / Me49)).